Consider the following 283-residue polypeptide: NAD kinase (283 aa).

Asp65 serves as the catalytic Proton acceptor. NAD(+) contacts are provided by residues 65–66 (DG), 139–140 (ND), Arg150, Arg167, Asp169, 180–185 (TGYSVS), and Gln239.

This sequence belongs to the NAD kinase family. A divalent metal cation is required as a cofactor.

It localises to the cytoplasm. The catalysed reaction is NAD(+) + ATP = ADP + NADP(+) + H(+). Functionally, involved in the regulation of the intracellular balance of NAD and NADP, and is a key enzyme in the biosynthesis of NADP. Catalyzes specifically the phosphorylation on 2'-hydroxyl of the adenosine moiety of NAD to yield NADP. The protein is NAD kinase of Nitratidesulfovibrio vulgaris (strain DSM 19637 / Miyazaki F) (Desulfovibrio vulgaris).